The primary structure comprises 225 residues: Thymidylate kinase (225 aa).

Residue 10–17 (GVEGGGKT) participates in ATP binding.

The protein belongs to the thymidylate kinase family.

It catalyses the reaction dTMP + ATP = dTDP + ADP. Phosphorylation of dTMP to form dTDP in both de novo and salvage pathways of dTTP synthesis. This is Thymidylate kinase from Trichodesmium erythraeum (strain IMS101).